The primary structure comprises 217 residues: Adenylate kinase (217 aa).

Position 10 to 15 (10 to 15 (GAGKGT)) interacts with ATP. Residues 30-59 (STGDIFRKNVADDTPLGRLAKQYMDAGDLV) are NMP. Residues T31, R36, 57 to 59 (DLV), 85 to 88 (GFPR), and Q92 each bind AMP. An LID region spans residues 126–163 (GRRTCADCAHVWHVTYDPPTVDGVCDLCGGKLFQREDD). R127 contacts ATP. The Zn(2+) site is built by C130, C133, C150, and C153. 2 residues coordinate AMP: R160 and R171. ATP is bound at residue G199.

The protein belongs to the adenylate kinase family. In terms of assembly, monomer.

Its subcellular location is the cytoplasm. The catalysed reaction is AMP + ATP = 2 ADP. Its pathway is purine metabolism; AMP biosynthesis via salvage pathway; AMP from ADP: step 1/1. Functionally, catalyzes the reversible transfer of the terminal phosphate group between ATP and AMP. Plays an important role in cellular energy homeostasis and in adenine nucleotide metabolism. The chain is Adenylate kinase from Acidothermus cellulolyticus (strain ATCC 43068 / DSM 8971 / 11B).